We begin with the raw amino-acid sequence, 509 residues long: Ribonuclease E/G-like protein (509 aa).

The region spanning 35–117 is the S1 motif domain; the sequence is SDIYLGCVDK…LTANITLSGR (83 aa). The Mg(2+) site is built by D296 and D339.

It belongs to the RNase E/G family. Mg(2+) is required as a cofactor.

It localises to the plastid. It is found in the chloroplast stroma. Its function is as follows. Involved in intercistronic processing of primary transcripts from chloroplast operons. The endonucleolytic activity of the enzyme depends on the number of phosphates at the 5' end, is inhibited by structured RNA, and preferentially cleaves A/U-rich sequences. The polypeptide is Ribonuclease E/G-like protein (rne) (Pyropia yezoensis (Susabi-nori)).